A 784-amino-acid chain; its full sequence is Endonuclease MutS2 (784 aa).

Residue 335-342 (GPNTGGKT) coordinates ATP. The 76-residue stretch at 709-784 (LDLRGERYED…GTGVTIVELK (76 aa)) folds into the Smr domain.

It belongs to the DNA mismatch repair MutS family. MutS2 subfamily. As to quaternary structure, homodimer. Binds to stalled ribosomes, contacting rRNA.

Functionally, endonuclease that is involved in the suppression of homologous recombination and thus may have a key role in the control of bacterial genetic diversity. Its function is as follows. Acts as a ribosome collision sensor, splitting the ribosome into its 2 subunits. Detects stalled/collided 70S ribosomes which it binds and splits by an ATP-hydrolysis driven conformational change. Acts upstream of the ribosome quality control system (RQC), a ribosome-associated complex that mediates the extraction of incompletely synthesized nascent chains from stalled ribosomes and their subsequent degradation. Probably generates substrates for RQC. The sequence is that of Endonuclease MutS2 from Geobacillus sp. (strain WCH70).